Reading from the N-terminus, the 1063-residue chain is Cellulose synthase A catalytic subunit 7 [UDP-forming] (1063 aa).

Topologically, residues 1-213 are cytoplasmic; that stretch reads MDTASVTGGE…IPSSKINPYR (213 aa). Residues Cys18, Cys21, Cys37, Cys40, Cys45, Cys48, Cys60, and Cys63 each coordinate Zn(2+). The RING-type; degenerate zinc finger occupies 18–64; that stretch reads CRVCGEEVAAREDGKPFVACAECGFPVCKPCYEYERSEGTQCCPQCN. The tract at residues 116 to 154 is disordered; it reads NGEQPAQKWRPGGPALSSFTGSVAGKDLEQEREMEGGME. The segment covering 141–154 has biased composition (basic and acidic residues); it reads KDLEQEREMEGGME. A helical membrane pass occupies residues 214–234; it reads IVIVLRLVVLCFFLKFRITTP. Topologically, residues 235–237 are extracellular; sequence AMD. Residues 238–258 form a helical membrane-spanning segment; the sequence is AVPLWLASVICELWFALSWIL. The Cytoplasmic segment spans residues 259 to 845; that stretch reads DQLPKWSPVT…TNTIVYPFTS (587 aa). UDP-alpha-D-glucose is bound by residues Ser297, Lys303, Glu304, and Asp333. The active site involves Asp333. Residues 387–414 are a coiled coil; that stretch reads VKERRAMKREYEEFKVRINALVAKAQKK. Lys474 contributes to the UDP-alpha-D-glucose binding site. 2 residues coordinate Mn(2+): Lys475 and Asp499. Asp762 is a catalytic residue. A helical membrane pass occupies residues 846–866; sequence IPLLAYCTIPAVCLLTGKFII. Residues 867-871 lie on the Extracellular side of the membrane; the sequence is PTLNN. Residues 872–892 form a helical membrane-spanning segment; that stretch reads LASIWFIALFLSIIATGVLEL. Topologically, residues 893–907 are cytoplasmic; it reads RWSGVSIEDWWRNEQ. Residues 908 to 928 traverse the membrane as a helical segment; it reads FWVIGGVSAHLFAVFQGLLKV. Residues 929-959 lie on the Extracellular side of the membrane; that stretch reads LGGVDTNFTVTSKAAADETDAFGELYLFKWT. N-linked (GlcNAc...) asparagine glycosylation occurs at Asn935. The helical transmembrane segment at 960 to 980 threads the bilayer; sequence TLLVPPTTLIIINMVGIVAGV. Topologically, residues 981–991 are cytoplasmic; the sequence is SDAVNNGYGSW. The chain crosses the membrane as a helical span at residues 992 to 1012; that stretch reads GPLFGKLFFSFWVILHLYPFL. Topologically, residues 1013 to 1021 are extracellular; it reads KGLMGRQNR. Residues 1022 to 1042 traverse the membrane as a helical segment; it reads TPTIVVLWSILLASIFSLVWV. Residues 1043-1063 are Cytoplasmic-facing; sequence RIDPFIPKPKGPVLKPCGVSC.

This sequence belongs to the glycosyltransferase 2 family. Plant cellulose synthase subfamily. Mn(2+) is required as a cofactor. The cofactor is Zn(2+).

Its subcellular location is the cell membrane. It catalyses the reaction [(1-&gt;4)-beta-D-glucosyl](n) + UDP-alpha-D-glucose = [(1-&gt;4)-beta-D-glucosyl](n+1) + UDP + H(+). Its pathway is glycan metabolism; plant cellulose biosynthesis. Catalytic subunit of cellulose synthase terminal complexes ('rosettes'), required for beta-1,4-glucan microfibril crystallization, a major mechanism of the cell wall formation. Involved in the secondary cell wall formation. The chain is Cellulose synthase A catalytic subunit 7 [UDP-forming] (CESA7) from Oryza sativa subsp. japonica (Rice).